We begin with the raw amino-acid sequence, 411 residues long: MTAQTPIHVYSEIGKLKKVLLHRPGKEIENLMPDYLERLLFDDIPFLEDAQKEHDAFAQALRDEGVEVLYLETLAAESLVTPEIREAFIDEYLSEANIRGRATKKAIRELLMSIEDNQELIEKTMAGVQKSELPEIPAAEKGLTDLVESSYPFAIDPMPNLYFTRDPFATIGTGVSLNHMFSETRNRETIYGKYIFTHHPIYGGGKVPMVYDRNETTRIEGGDELVLSKDVLAVGISQRTDAASIEKLLVNIFKQKLGFKKVLAFEFANNRKFMHLDTVFTMVDYDKFTIHPEIEGDLRVYSVTYENEELRIVEETGDLAELLAANLGVEHVELIRCGGDNLVAAGREQWNDGSNTLTIAPGVVVVYNRNTITNAILESKGLKLIKIHGSELVRGRGGPRCMSMPFEREDI.

C401 (amidino-cysteine intermediate) is an active-site residue.

The protein belongs to the arginine deiminase family.

It localises to the cytoplasm. The catalysed reaction is L-arginine + H2O = L-citrulline + NH4(+). Its pathway is amino-acid degradation; L-arginine degradation via ADI pathway; carbamoyl phosphate from L-arginine: step 1/2. The chain is Arginine deiminase from Streptococcus equi subsp. zooepidemicus (strain H70).